Reading from the N-terminus, the 360-residue chain is Peptide chain release factor 1 (360 aa).

Gln-235 carries the N5-methylglutamine modification. Residues 291-308 are compositionally biased toward basic and acidic residues; sequence ASERRNLLGTGDRSDRNR. Residues 291–312 are disordered; it reads ASERRNLLGTGDRSDRNRTYNF.

The protein belongs to the prokaryotic/mitochondrial release factor family. Methylated by PrmC. Methylation increases the termination efficiency of RF1.

It is found in the cytoplasm. Peptide chain release factor 1 directs the termination of translation in response to the peptide chain termination codons UAG and UAA. The protein is Peptide chain release factor 1 of Yersinia pseudotuberculosis serotype I (strain IP32953).